We begin with the raw amino-acid sequence, 851 residues long: DNA mismatch repair protein MutS (851 aa).

Position 614-621 (614-621 (GPNMGGKS)) interacts with ATP.

The protein belongs to the DNA mismatch repair MutS family.

This protein is involved in the repair of mismatches in DNA. It is possible that it carries out the mismatch recognition step. This protein has a weak ATPase activity. This is DNA mismatch repair protein MutS from Photorhabdus laumondii subsp. laumondii (strain DSM 15139 / CIP 105565 / TT01) (Photorhabdus luminescens subsp. laumondii).